The chain runs to 235 residues: Probable inactive serine protease 37 (235 aa).

The N-terminal stretch at 1–19 is a signal peptide; that stretch reads MKFIFYLSVLTGTFLFADS. Positions 20-233 constitute a Peptidase S1 domain; sequence SVQKEDPAPY…YVSWIENTAK (214 aa). Intrachain disulfides connect Cys-40/Cys-56, Cys-131/Cys-198, and Cys-163/Cys-177.

It belongs to the peptidase S1 family.

The protein resides in the cytoplasmic vesicle. It localises to the secretory vesicle. The protein localises to the acrosome. It is found in the secreted. In terms of biological role, plays a role in male fertility. May have a role in sperm migration or binding to zona-intact eggs. Involved in the activation of the proacrosin/acrosin system. In Macaca fascicularis (Crab-eating macaque), this protein is Probable inactive serine protease 37.